We begin with the raw amino-acid sequence, 593 residues long: Arginine--tRNA ligase (593 aa).

Residues Pro123–His133 carry the 'HIGH' region motif.

The protein belongs to the class-I aminoacyl-tRNA synthetase family. In terms of assembly, monomer.

The protein resides in the cytoplasm. The catalysed reaction is tRNA(Arg) + L-arginine + ATP = L-arginyl-tRNA(Arg) + AMP + diphosphate. The chain is Arginine--tRNA ligase from Phenylobacterium zucineum (strain HLK1).